A 194-amino-acid polypeptide reads, in one-letter code: Cation channel sperm-associated auxiliary subunit zeta (194 aa).

In terms of assembly, component of the CatSper complex or CatSpermasome composed of the core pore-forming members CATSPER1, CATSPER2, CATSPER3 and CATSPER4 as well as auxiliary members CATSPERB, CATSPERG2, CATSPERD, CATSPERE, CATSPERZ, C2CD6/CATSPERT, SLCO6C1, TMEM249, TMEM262 and EFCAB9. HSPA1 may be an additional auxiliary complex member. The core complex members CATSPER1, CATSPER2, CATSPER3 and CATSPER4 form a heterotetrameric channel. The auxiliary CATSPERB, CATSPERG2, CATSPERD and CATSPERE subunits form a pavilion-like structure over the pore which stabilizes the complex through interactions with CATSPER4, CATSPER3, CATSPER1 and CATSPER2 respectively. SLCO6C1 interacts with CATSPERE and TMEM262/CATSPERH interacts with CATSPERB, further stabilizing the complex. C2CD6/CATSPERT interacts at least with CATSPERD and is required for targeting the CatSper complex in the flagellar membrane. Interacts with EFCAB9; the interaction is direct, Ca(2+)-dependent and connects EFCAB9 with the CatSper complex. Dissociates from EFCAB9 at elevated pH. As to expression, testis-specific. Expressed in adult but not in fetal testis. Not expressed in ovary. Within testis, expression is restricted to spermatids.

It is found in the cell projection. It localises to the cilium. The protein resides in the flagellum membrane. Functionally, auxiliary component of the CatSper complex, a complex involved in sperm cell hyperactivation. Sperm cell hyperactivation is needed for sperm motility which is essential late in the preparation of sperm for fertilization. Required for a distribution of the CatSper complex in linear quadrilateral nanodomains along the flagellum, maximizing fertilization inside the mammalian female reproductive tract. Together with EFCAB9, associates with the CatSper channel pore and is required for the two-row structure of each single CatSper channel. The protein is Cation channel sperm-associated auxiliary subunit zeta of Mus musculus (Mouse).